A 127-amino-acid chain; its full sequence is Glycine cleavage system H protein (127 aa).

The Lipoyl-binding domain maps to 24 to 105 (TAVVGITDFA…YNEGWIVKMK (82 aa)). Position 65 is an N6-lipoyllysine (lysine 65).

The protein belongs to the GcvH family. The glycine cleavage system is composed of four proteins: P, T, L and H. Requires (R)-lipoate as cofactor.

In terms of biological role, the glycine cleavage system catalyzes the degradation of glycine. The H protein shuttles the methylamine group of glycine from the P protein to the T protein. This chain is Glycine cleavage system H protein, found in Chlorobaculum parvum (strain DSM 263 / NCIMB 8327) (Chlorobium vibrioforme subsp. thiosulfatophilum).